The chain runs to 851 residues: Venom phosphodiesterase 1 (851 aa).

An N-terminal signal peptide occupies residues Met1–Gly23. SMB domains follow at residues Pro30 to Thr73 and Gln74 to Ser118. 16 disulfide bridges follow: Cys34/Cys38, Cys34/Cys51, Cys38/Cys69, Cys49/Cys51, Cys49/Cys62, Cys55/Cys61, Cys62/Cys69, Cys78/Cys83, Cys78/Cys95, Cys83/Cys113, Cys93/Cys95, Cys93/Cys106, Cys99/Cys105, Cys106/Cys113, Cys124/Cys170, and Cys132/Cys344. The N-linked (GlcNAc...) asparagine glycan is linked to Asn39. The short motif at Arg58–Ala60 is the Cell attachment site element. A divalent metal cation contacts are provided by Asp147 and Thr185. Catalysis depends on Thr185, which acts as the AMP-threonine intermediate. N-linked (GlcNAc...) asparagine glycans are attached at residues Asn216, Asn259, and Asn270. Lys271 is a binding site for AMP. A divalent metal cation is bound by residues Asp305, His309, Asp352, and His353. Position 309 (His309) interacts with AMP. 6 disulfide bridges follow: Cys360-Cys457, Cys408-Cys793, Cys541-Cys599, Cys554-Cys654, Cys556-Cys639, and Cys762-Cys772. Residue Asn405 is glycosylated (N-linked (GlcNAc...) asparagine). Residue His462 coordinates a divalent metal cation. N-linked (GlcNAc...) asparagine glycans are attached at residues Asn512, Asn594, Asn674, and Asn745.

It belongs to the nucleotide pyrophosphatase/phosphodiesterase family. In terms of assembly, monomer cleaved in two subunits; disulfide-linked. Is synthesized as a single-chain protein and is subsequently cleaved to form a two-subunit protein held together with disulfide bonds. The cofactor is a divalent metal cation. Expressed by venom gland.

The protein resides in the secreted. The catalysed reaction is ADP + H2O = AMP + phosphate + H(+). Hydrolyzes ADP with high activity. Shows weak or no activity on 5'-AMP, 5'-GMP, 3'-AMP, ATP, cAMP, and cGMP. Is devoid of monophosphatase and proteinase activities. Dose-dependently inhibits platelet aggregation induced by ADP and collagen. This is Venom phosphodiesterase 1 from Crotalus adamanteus (Eastern diamondback rattlesnake).